A 118-amino-acid polypeptide reads, in one-letter code: Large ribosomal subunit protein uL18 (118 aa).

Belongs to the universal ribosomal protein uL18 family. Part of the 50S ribosomal subunit; part of the 5S rRNA/L5/L18/L25 subcomplex. Contacts the 5S and 23S rRNAs.

This is one of the proteins that bind and probably mediate the attachment of the 5S RNA into the large ribosomal subunit, where it forms part of the central protuberance. The protein is Large ribosomal subunit protein uL18 of Sulfurovum sp. (strain NBC37-1).